We begin with the raw amino-acid sequence, 411 residues long: UPF0761 membrane protein PLES_43641 (411 aa).

The next 6 helical transmembrane spans lie at 36 to 56 (LFAV…IPAF), 92 to 112 (HLTW…LVTI), 132 to 152 (FLLY…GFAV), 174 to 194 (LLGL…YSAV), 207 to 229 (GGVF…VSLF), and 244 to 264 (IFLL…VLVC).

The protein belongs to the UPF0761 family.

Its subcellular location is the cell inner membrane. The polypeptide is UPF0761 membrane protein PLES_43641 (Pseudomonas aeruginosa (strain LESB58)).